Here is a 96-residue protein sequence, read N- to C-terminus: Putative septation protein SpoVG (96 aa).

Belongs to the SpoVG family.

Its function is as follows. Could be involved in septation. The polypeptide is Putative septation protein SpoVG (Oceanobacillus iheyensis (strain DSM 14371 / CIP 107618 / JCM 11309 / KCTC 3954 / HTE831)).